A 428-amino-acid chain; its full sequence is 3-phosphoshikimate 1-carboxyvinyltransferase (428 aa).

3-phosphoshikimate contacts are provided by lysine 22, serine 23, and arginine 27. Lysine 22 provides a ligand contact to phosphoenolpyruvate. Residues glycine 96 and arginine 124 each contribute to the phosphoenolpyruvate site. Positions 170, 171, 172, 198, 314, 337, and 341 each coordinate 3-phosphoshikimate. Residue glutamine 172 coordinates phosphoenolpyruvate. Aspartate 314 serves as the catalytic Proton acceptor. The phosphoenolpyruvate site is built by arginine 345, arginine 387, and lysine 412.

This sequence belongs to the EPSP synthase family. In terms of assembly, monomer.

Its subcellular location is the cytoplasm. The catalysed reaction is 3-phosphoshikimate + phosphoenolpyruvate = 5-O-(1-carboxyvinyl)-3-phosphoshikimate + phosphate. The protein operates within metabolic intermediate biosynthesis; chorismate biosynthesis; chorismate from D-erythrose 4-phosphate and phosphoenolpyruvate: step 6/7. In terms of biological role, catalyzes the transfer of the enolpyruvyl moiety of phosphoenolpyruvate (PEP) to the 5-hydroxyl of shikimate-3-phosphate (S3P) to produce enolpyruvyl shikimate-3-phosphate and inorganic phosphate. The sequence is that of 3-phosphoshikimate 1-carboxyvinyltransferase from Photobacterium profundum (strain SS9).